Consider the following 556-residue polypeptide: Dihydroxy-acid dehydratase (556 aa).

Residue aspartate 78 participates in Mg(2+) binding. Position 119 (cysteine 119) interacts with [2Fe-2S] cluster. The Mg(2+) site is built by aspartate 120 and lysine 121. The residue at position 121 (lysine 121) is an N6-carboxylysine. Cysteine 191 contributes to the [2Fe-2S] cluster binding site. Glutamate 442 lines the Mg(2+) pocket. The Proton acceptor role is filled by serine 468.

This sequence belongs to the IlvD/Edd family. In terms of assembly, homodimer. It depends on [2Fe-2S] cluster as a cofactor. Requires Mg(2+) as cofactor.

It catalyses the reaction (2R)-2,3-dihydroxy-3-methylbutanoate = 3-methyl-2-oxobutanoate + H2O. The enzyme catalyses (2R,3R)-2,3-dihydroxy-3-methylpentanoate = (S)-3-methyl-2-oxopentanoate + H2O. The protein operates within amino-acid biosynthesis; L-isoleucine biosynthesis; L-isoleucine from 2-oxobutanoate: step 3/4. It functions in the pathway amino-acid biosynthesis; L-valine biosynthesis; L-valine from pyruvate: step 3/4. In terms of biological role, functions in the biosynthesis of branched-chain amino acids. Catalyzes the dehydration of (2R,3R)-2,3-dihydroxy-3-methylpentanoate (2,3-dihydroxy-3-methylvalerate) into 2-oxo-3-methylpentanoate (2-oxo-3-methylvalerate) and of (2R)-2,3-dihydroxy-3-methylbutanoate (2,3-dihydroxyisovalerate) into 2-oxo-3-methylbutanoate (2-oxoisovalerate), the penultimate precursor to L-isoleucine and L-valine, respectively. This is Dihydroxy-acid dehydratase from Caldanaerobacter subterraneus subsp. tengcongensis (strain DSM 15242 / JCM 11007 / NBRC 100824 / MB4) (Thermoanaerobacter tengcongensis).